A 144-amino-acid polypeptide reads, in one-letter code: Large ribosomal subunit protein uL15 (144 aa).

The interval 1–57 (MRLNTLSPAPGSKPSAKRVGRGIGSGLGKTCGRGHKGQKSRSGGSVRPGFEGGQMPL) is disordered. Positions 21–31 (RGIGSGLGKTC) are enriched in gly residues.

This sequence belongs to the universal ribosomal protein uL15 family. Part of the 50S ribosomal subunit.

Binds to the 23S rRNA. This is Large ribosomal subunit protein uL15 from Photobacterium profundum (strain SS9).